A 239-amino-acid polypeptide reads, in one-letter code: 1-(5-phosphoribosyl)-5-[(5-phosphoribosylamino)methylideneamino] imidazole-4-carboxamide isomerase (239 aa).

Asp8 serves as the catalytic Proton acceptor. Catalysis depends on Asp129, which acts as the Proton donor.

The protein belongs to the HisA/HisF family.

Its subcellular location is the cytoplasm. The enzyme catalyses 1-(5-phospho-beta-D-ribosyl)-5-[(5-phospho-beta-D-ribosylamino)methylideneamino]imidazole-4-carboxamide = 5-[(5-phospho-1-deoxy-D-ribulos-1-ylimino)methylamino]-1-(5-phospho-beta-D-ribosyl)imidazole-4-carboxamide. The protein operates within amino-acid biosynthesis; L-histidine biosynthesis; L-histidine from 5-phospho-alpha-D-ribose 1-diphosphate: step 4/9. This is 1-(5-phosphoribosyl)-5-[(5-phosphoribosylamino)methylideneamino] imidazole-4-carboxamide isomerase from Bacillus cytotoxicus (strain DSM 22905 / CIP 110041 / 391-98 / NVH 391-98).